The primary structure comprises 436 residues: Trigger factor (436 aa).

In terms of domain architecture, PPIase FKBP-type spans 163 to 248 (GDRVVLDFAG…VKEVAEGVLP (86 aa)).

The protein belongs to the FKBP-type PPIase family. Tig subfamily.

The protein resides in the cytoplasm. It carries out the reaction [protein]-peptidylproline (omega=180) = [protein]-peptidylproline (omega=0). Its function is as follows. Involved in protein export. Acts as a chaperone by maintaining the newly synthesized protein in an open conformation. Functions as a peptidyl-prolyl cis-trans isomerase. This Bordetella bronchiseptica (strain ATCC BAA-588 / NCTC 13252 / RB50) (Alcaligenes bronchisepticus) protein is Trigger factor.